We begin with the raw amino-acid sequence, 339 residues long: SVP1-like protein 2 (339 aa).

WD repeat units follow at residues 177 to 217 (AHAN…LVRE) and 222 to 261 (LDRT…ENKR).

Belongs to the WD repeat PROPPIN family.

Its subcellular location is the vacuole membrane. It is found in the cytoplasmic vesicle membrane. Functionally, involved in mitochondrial or peroxisomal functions and amino acid signaling pathways. The polypeptide is SVP1-like protein 2 (HSV2) (Kluyveromyces lactis (strain ATCC 8585 / CBS 2359 / DSM 70799 / NBRC 1267 / NRRL Y-1140 / WM37) (Yeast)).